A 416-amino-acid chain; its full sequence is UDP-N-acetylglucosamine 1-carboxyvinyltransferase (416 aa).

22–23 (KN) contributes to the phosphoenolpyruvate binding site. UDP-N-acetyl-alpha-D-glucosamine is bound at residue Arg-91. Cys-115 (proton donor) is an active-site residue. The residue at position 115 (Cys-115) is a 2-(S-cysteinyl)pyruvic acid O-phosphothioketal. UDP-N-acetyl-alpha-D-glucosamine-binding positions include 120–124 (RPIDL), Asp-303, and Ile-325.

It belongs to the EPSP synthase family. MurA subfamily.

The protein resides in the cytoplasm. It carries out the reaction phosphoenolpyruvate + UDP-N-acetyl-alpha-D-glucosamine = UDP-N-acetyl-3-O-(1-carboxyvinyl)-alpha-D-glucosamine + phosphate. Its pathway is cell wall biogenesis; peptidoglycan biosynthesis. In terms of biological role, cell wall formation. Adds enolpyruvyl to UDP-N-acetylglucosamine. The protein is UDP-N-acetylglucosamine 1-carboxyvinyltransferase of Lawsonia intracellularis (strain PHE/MN1-00).